We begin with the raw amino-acid sequence, 395 residues long: Elongation factor Tu (395 aa).

The tr-type G domain maps to 10 to 204 (KPHVNIGTIG…TVDSYIPEPK (195 aa)). The interval 19 to 26 (GHVDHGKT) is G1. GTP is bound at residue 19–26 (GHVDHGKT). T26 lines the Mg(2+) pocket. Residues 60-64 (GITIN) form a G2 region. Residues 81–84 (DAPG) are G3. GTP contacts are provided by residues 81–85 (DAPGH) and 136–139 (NKTD). The interval 136–139 (NKTD) is G4. A G5 region spans residues 174 to 176 (SAL).

Belongs to the TRAFAC class translation factor GTPase superfamily. Classic translation factor GTPase family. EF-Tu/EF-1A subfamily. Monomer.

Its subcellular location is the cytoplasm. The catalysed reaction is GTP + H2O = GDP + phosphate + H(+). GTP hydrolase that promotes the GTP-dependent binding of aminoacyl-tRNA to the A-site of ribosomes during protein biosynthesis. The protein is Elongation factor Tu of Leuconostoc citreum (strain KM20).